Reading from the N-terminus, the 233-residue chain is Large ribosomal subunit protein uL3 (233 aa).

It belongs to the universal ribosomal protein uL3 family. In terms of assembly, part of the 50S ribosomal subunit. Forms a cluster with proteins L14 and L19.

Its function is as follows. One of the primary rRNA binding proteins, it binds directly near the 3'-end of the 23S rRNA, where it nucleates assembly of the 50S subunit. The chain is Large ribosomal subunit protein uL3 from Ureaplasma urealyticum serovar 10 (strain ATCC 33699 / Western).